A 172-amino-acid polypeptide reads, in one-letter code: Pollen-specific protein-like At4g18596 (172 aa).

A signal peptide spans 1–27 (MASKAIFFFFVSAVCLSSLAGVAIADA). 3 disulfide bridges follow: C41/C112, C44/C157, and C65/C100. Residue N70 is glycosylated (N-linked (GlcNAc...) asparagine).

The protein belongs to the Ole e I family.

Its subcellular location is the secreted. This Arabidopsis thaliana (Mouse-ear cress) protein is Pollen-specific protein-like At4g18596.